Consider the following 254-residue polypeptide: PF03932 family protein CutC (254 aa).

The protein belongs to the CutC family.

The protein resides in the cytoplasm. This Yersinia pseudotuberculosis serotype O:1b (strain IP 31758) protein is PF03932 family protein CutC.